Here is a 498-residue protein sequence, read N- to C-terminus: ATP synthase subunit beta, chloroplastic (498 aa).

Residue 172 to 179 participates in ATP binding; the sequence is GGAGVGKT.

It belongs to the ATPase alpha/beta chains family. F-type ATPases have 2 components, CF(1) - the catalytic core - and CF(0) - the membrane proton channel. CF(1) has five subunits: alpha(3), beta(3), gamma(1), delta(1), epsilon(1). CF(0) has four main subunits: a(1), b(1), b'(1) and c(9-12).

Its subcellular location is the plastid. The protein localises to the chloroplast thylakoid membrane. It catalyses the reaction ATP + H2O + 4 H(+)(in) = ADP + phosphate + 5 H(+)(out). In terms of biological role, produces ATP from ADP in the presence of a proton gradient across the membrane. The catalytic sites are hosted primarily by the beta subunits. The protein is ATP synthase subunit beta, chloroplastic of Hyophorbe lagenicaulis (Bottle palm).